The following is a 606-amino-acid chain: Proline--tRNA ligase (606 aa).

Belongs to the class-II aminoacyl-tRNA synthetase family. ProS type 1 subfamily. As to quaternary structure, homodimer.

It localises to the cytoplasm. It carries out the reaction tRNA(Pro) + L-proline + ATP = L-prolyl-tRNA(Pro) + AMP + diphosphate. Functionally, catalyzes the attachment of proline to tRNA(Pro) in a two-step reaction: proline is first activated by ATP to form Pro-AMP and then transferred to the acceptor end of tRNA(Pro). As ProRS can inadvertently accommodate and process non-cognate amino acids such as alanine and cysteine, to avoid such errors it has two additional distinct editing activities against alanine. One activity is designated as 'pretransfer' editing and involves the tRNA(Pro)-independent hydrolysis of activated Ala-AMP. The other activity is designated 'posttransfer' editing and involves deacylation of mischarged Ala-tRNA(Pro). The misacylated Cys-tRNA(Pro) is not edited by ProRS. The chain is Proline--tRNA ligase from Kocuria rhizophila (strain ATCC 9341 / DSM 348 / NBRC 103217 / DC2201).